The chain runs to 196 residues: Pyridoxine/pyridoxamine 5'-phosphate oxidase (196 aa).

Residues 46–51 (RNVLYK), 61–62 (FT), Arg67, Lys68, and Gln90 contribute to the FMN site. Lys51 contributes to the substrate binding site. Positions 108, 112, and 116 each coordinate substrate. Residues 125–126 (QS) and Trp169 each bind FMN. 175 to 177 (RLH) contributes to the substrate binding site. Arg179 provides a ligand contact to FMN.

The protein belongs to the pyridoxamine 5'-phosphate oxidase family. As to quaternary structure, homodimer. It depends on FMN as a cofactor.

The catalysed reaction is pyridoxamine 5'-phosphate + O2 + H2O = pyridoxal 5'-phosphate + H2O2 + NH4(+). It carries out the reaction pyridoxine 5'-phosphate + O2 = pyridoxal 5'-phosphate + H2O2. The protein operates within cofactor metabolism; pyridoxal 5'-phosphate salvage; pyridoxal 5'-phosphate from pyridoxamine 5'-phosphate: step 1/1. Its pathway is cofactor metabolism; pyridoxal 5'-phosphate salvage; pyridoxal 5'-phosphate from pyridoxine 5'-phosphate: step 1/1. In terms of biological role, catalyzes the oxidation of either pyridoxine 5'-phosphate (PNP) or pyridoxamine 5'-phosphate (PMP) into pyridoxal 5'-phosphate (PLP). This chain is Pyridoxine/pyridoxamine 5'-phosphate oxidase, found in Coxiella burnetii (strain RSA 493 / Nine Mile phase I).